A 126-amino-acid polypeptide reads, in one-letter code: C-type natriuretic peptide (126 aa).

The first 23 residues, 1-23 (MHLSQLLACALLLTLLSLRPSEA), serve as a signal peptide directing secretion. Residues 20–71 (PSEAKPGAPPKVPRTPPAEELAEPQAAGGGQKKGDKAPGGGGANLKGDRSRL) are disordered. The propeptide occupies 24 to 73 (KPGAPPKVPRTPPAEELAEPQAAGGGQKKGDKAPGGGGANLKGDRSRLLR). The segment covering 26 to 35 (GAPPKVPRTP) has biased composition (pro residues). Residues 46–63 (AGGGQKKGDKAPGGGGAN) show a composition bias toward gly residues. Cysteine 110 and cysteine 126 are oxidised to a cystine.

This sequence belongs to the natriuretic peptide family. Post-translationally, degraded by IDE (in vitro). In terms of tissue distribution, in the kidney, predominantly expressed in the distal tubular cells (at protein level).

The protein resides in the secreted. Functionally, hormone which plays a role in endochondral ossification through regulation of cartilaginous growth plate chondrocytes proliferation and differentiation. May also be vasoactive and natriuretic. Acts by specifically binding and stimulating NPR2 to produce cGMP. Binds the clearance receptor NPR3. The polypeptide is C-type natriuretic peptide (NPPC) (Homo sapiens (Human)).